The following is a 204-amino-acid chain: Somatotropin (204 aa).

Residues 1-17 (MDRAVLLLSVLSLGVSS) form the signal peptide. Position 18 is a pyrrolidone carboxylic acid (glutamine 18). Histidine 35 is a Zn(2+) binding site. Cysteine 69 and cysteine 177 form a disulfide bridge. A Zn(2+)-binding site is contributed by glutamate 186. Cysteine 194 and cysteine 202 are disulfide-bonded.

It belongs to the somatotropin/prolactin family.

It localises to the secreted. Its function is as follows. Growth hormone plays an important role in growth control and is involved in the regulation of several anabolic processes. Implicated as an osmoregulatory substance important for seawater adaptation. This chain is Somatotropin (gh), found in Morone saxatilis (Striped bass).